Reading from the N-terminus, the 86-residue chain is RNA-binding protein Hfq (86 aa).

In terms of domain architecture, Sm spans 9–68 (DPFLNALRRERIPVSIYLVNGIKLQGQIESFDQFVILLKNTVNQMVYKHAISTVVPARPV). Residues 65–86 (ARPVSHHSGERGSDRPSEKSED) are disordered. Residues 71 to 86 (HSGERGSDRPSEKSED) show a composition bias toward basic and acidic residues.

The protein belongs to the Hfq family. In terms of assembly, homohexamer.

RNA chaperone that binds small regulatory RNA (sRNAs) and mRNAs to facilitate mRNA translational regulation in response to envelope stress, environmental stress and changes in metabolite concentrations. Also binds with high specificity to tRNAs. This is RNA-binding protein Hfq from Vibrio vulnificus (strain YJ016).